Here is a 3380-residue protein sequence, read N- to C-terminus: Apolipophorins (3380 aa).

Positions 1–21 (MGTPPHIWFLLILAISSGGLS) are cleaved as a signal peptide. The Vitellogenin domain maps to 40–646 (YQKGQTYTYS…SQSSYLPRSV (607 aa)). 6 N-linked (GlcNAc...) asparagine glycosylation sites follow: asparagine 132, asparagine 649, asparagine 969, asparagine 2174, asparagine 2851, and asparagine 3177. The 165-residue stretch at 2815-2979 (ATAILLNSHH…NAWKVDAQCA (165 aa)) folds into the VWFD domain. A disulfide bond links cysteine 2839 and cysteine 2978.

Cleaved into 2 chains by furin protease. However, prevention of cleavage does not impair its function. Post-translationally, N-glycosylated. Present in brain, hemolymph, fat body and eyes.

The protein localises to the secreted. Constitutes the major component of lipophorin, which mediates transport for various types of lipids in hemolymph. Acts by forming lipoprotein particles that bind lipoproteins and lipids. May be required for morphogens wingless (wg) and hedgehog (hh) function, possibly by acting as vehicles for the movement of wg and hh. This chain is Apolipophorins, found in Locusta migratoria (Migratory locust).